Reading from the N-terminus, the 589-residue chain is Kelch-like protein diablo (589 aa).

A disordered region spans residues 1-22 (MGDVLISDRPPSPARLSHTSEK). Residues 41-108 (CDVVINVSGR…CYTSHIVVEE (68 aa)) form the BTB domain. The BACK domain occupies 143–245 (CLGIRAFADT…SPKFLVGTVG (103 aa)). Kelch repeat units follow at residues 292-338 (VLFA…VLND), 340-386 (LYAV…VLDG), 387-433 (FLYA…VLGG), 435-480 (LYAI…VFNN), 482-527 (IYAV…VVNG), and 528-574 (QLYA…VMRA).

Its pathway is protein modification; protein ubiquitination. In terms of biological role, probable substrate-specific adapter of an E3 ubiquitin-protein ligase complex which mediates the ubiquitination and subsequent proteasomal degradation of target proteins. May have a role in synapse differentiation and growth. The sequence is that of Kelch-like protein diablo from Aedes aegypti (Yellowfever mosquito).